A 201-amino-acid polypeptide reads, in one-letter code: Ribonuclease HII (201 aa).

Positions 12-201 constitute an RNase H type-2 domain; the sequence is DLVAGVDEVG…VRELLDVSVQ (190 aa). A divalent metal cation is bound by residues aspartate 18, glutamate 19, and aspartate 110.

The protein belongs to the RNase HII family. The cofactor is Mn(2+). It depends on Mg(2+) as a cofactor.

The protein localises to the cytoplasm. The catalysed reaction is Endonucleolytic cleavage to 5'-phosphomonoester.. In terms of biological role, endonuclease that specifically degrades the RNA of RNA-DNA hybrids. This chain is Ribonuclease HII, found in Pseudomonas aeruginosa (strain ATCC 15692 / DSM 22644 / CIP 104116 / JCM 14847 / LMG 12228 / 1C / PRS 101 / PAO1).